Reading from the N-terminus, the 378-residue chain is MIIGVPKEIKNNENRVALTPGGVSQLISNGHRVLVETGAGLGSGFENEAYESAGAEIIADPKQVWDAEMVMKVKEPLPEEYVYFRKGLVLFTYLHLAAEPELAQALKDKGVTAIAYETVSEGRTLPLLTPMSEVAGRMAAQIGAQFLEKPKGGKGILLAGVPGVSRGKVTIIGGGVVGTNAAKMAVGLGADVTIIDLNADRLRQLDDIFGHQIKTLISNPVNIADAVAEADLLICAVLIPGAKAPTLVTEEMVKQMKPGSVIVDVAIDQGGIVETVDHITTHDQPTYEKHGVVHYAVANMPGAVPRTSTIALTNVTVPYALQIANKGAVKALADNTALRAGLNTANGHVTYEAVARDLGYEYVPAEKALQDESSVAGA.

Positions 15 and 74 each coordinate substrate. Residue histidine 95 is the Proton donor/acceptor of the active site. NAD(+)-binding positions include serine 132, 176–177 (VV), aspartate 196, serine 218, 237–238 (VL), 265–268 (VAID), and 297–300 (VANM). The active-site Proton donor/acceptor is the aspartate 268.

It belongs to the AlaDH/PNT family. In terms of assembly, homohexamer. Trimer of dimer.

It is found in the cytoplasm. The enzyme catalyses L-alanine + NAD(+) + H2O = pyruvate + NH4(+) + NADH + H(+). It participates in amino-acid degradation; L-alanine degradation via dehydrogenase pathway; NH(3) and pyruvate from L-alanine: step 1/1. Functionally, catalyzes the reversible oxidative deamination of L-alanine to pyruvate. Oxidative deamination proceeds through a sequential, ordered ternary-binary mechanism, where NAD(+) binds first followed by L-alanine; the products are released in the order ammonia, pyruvate and NADH. Disruption blocks sporulation probably in stage V; 20-30% sporulation can be restored if the media is supplemented with pyruvate, suggesting lack of pyruvate blocks sporulation. Thus it is a key factor in the assimilation of L-alanine as an energy source via the tricarboxylic acid cycle during sporulation. The chain is Alanine dehydrogenase from Bacillus subtilis (strain 168).